We begin with the raw amino-acid sequence, 920 residues long: Bifunctional aspartokinase/homoserine dehydrogenase 1, chloroplastic (920 aa).

The tract at residues 1–21 is disordered; the sequence is MRSLTVASRHPGAAFSTRRRP. The N-terminal 92 residues, 1-92, are a transit peptide targeting the chloroplast; sequence MRSLTVASRH…EAIADLPKGD (92 aa). The tract at residues 93–341 is aspartokinase; the sequence is MWSVHKFGGT…VSEAVILSTL (249 aa). An interface region spans residues 342-566; sequence SYQEAWEMSY…LSKTTLAVGI (225 aa). ACT domains follow at residues 416-491 and 497-574; these read VEGT…VIHN and TVGL…LIGR. A homoserine dehydrogenase region spans residues 567-920; that stretch reads IGPGLIGRTL…RLSSYLGAPS (354 aa). Isoleucine 572 and alanine 601 together coordinate NAD(+). Isoleucine 572 serves as a coordination point for NADP(+). Residue isoleucine 572 participates in NADPH binding. Residues arginine 604, threonine 653, and lysine 677 each contribute to the NADP(+) site. Threonine 653 serves as a coordination point for NAD(+). NADPH contacts are provided by threonine 653 and lysine 677. Residues glutamate 704, valine 707, alanine 709, and leucine 711 each contribute to the Na(+) site. Positions 762 and 765 each coordinate NADP(+). L-homoserine-binding residues include glutamate 765 and aspartate 776. Lysine 780 (proton donor) is an active-site residue. Glycine 897 contributes to the NAD(+) binding site. Glycine 897 provides a ligand contact to NADP(+). Glycine 897 is an NADPH binding site.

The protein in the N-terminal section; belongs to the aspartokinase family. In the C-terminal section; belongs to the homoserine dehydrogenase family. As to quaternary structure, homo- or heterodimer. The cofactor is a metal cation.

It is found in the plastid. The protein localises to the chloroplast. The enzyme catalyses L-homoserine + NADP(+) = L-aspartate 4-semialdehyde + NADPH + H(+). The catalysed reaction is L-homoserine + NAD(+) = L-aspartate 4-semialdehyde + NADH + H(+). It carries out the reaction L-aspartate + ATP = 4-phospho-L-aspartate + ADP. It functions in the pathway amino-acid biosynthesis; L-lysine biosynthesis via DAP pathway; (S)-tetrahydrodipicolinate from L-aspartate: step 1/4. Its pathway is amino-acid biosynthesis; L-methionine biosynthesis via de novo pathway; L-homoserine from L-aspartate: step 1/3. It participates in amino-acid biosynthesis; L-methionine biosynthesis via de novo pathway; L-homoserine from L-aspartate: step 3/3. The protein operates within amino-acid biosynthesis; L-threonine biosynthesis; L-threonine from L-aspartate: step 1/5. It functions in the pathway amino-acid biosynthesis; L-threonine biosynthesis; L-threonine from L-aspartate: step 3/5. Its function is as follows. Bifunctional aspartate kinase and homoserine dehydrogenase that catalyzes the first and the third steps toward the synthesis of lysine, methionine and threonine from aspartate. The chain is Bifunctional aspartokinase/homoserine dehydrogenase 1, chloroplastic (AKHSDH1) from Zea mays (Maize).